Consider the following 298-residue polypeptide: MSVKPYIGRFAPSPSGELHFGSLIAALGSYLQARALKGQWLVRIEDIDPPREVPGAADAILRQLDHYGLHWDGEVLYQSQRHEAYREALAYLREHGLSYYCTCPRSRIQQLGGIYDGHCRALRHGPENAAVRLVQTHPVMAFTDKLRGDITADPALAREDFIIHRRDGLFAYNLAVVVDDHFQGVTEIVRGADLIEPTVRQISLYQQFGWQAPDYVHLPLVVNPDGNKLSKQNHAPPLPEGDPRPVLVEALAFLNQPVDDDWRALSTETLLRQAVEKWDLSAVPAAAAANPAFSNALR.

L-glutamate contacts are provided by residues 9 to 13 (RFAPS) and Glu-45. Residues 12–22 (PSPSGELHFGS) carry the 'HIGH' region motif. Residues Cys-101, Cys-103, Tyr-115, and Cys-119 each coordinate Zn(2+). Positions 172 and 190 each coordinate L-glutamate. The short motif at 228–232 (KLSKQ) is the 'KMSKS' region element. An ATP-binding site is contributed by Lys-231.

The protein belongs to the class-I aminoacyl-tRNA synthetase family. GluQ subfamily. Zn(2+) serves as cofactor.

Catalyzes the tRNA-independent activation of glutamate in presence of ATP and the subsequent transfer of glutamate onto a tRNA(Asp). Glutamate is transferred on the 2-amino-5-(4,5-dihydroxy-2-cyclopenten-1-yl) moiety of the queuosine in the wobble position of the QUC anticodon. This chain is Glutamyl-Q tRNA(Asp) synthetase, found in Cronobacter sakazakii (strain ATCC BAA-894) (Enterobacter sakazakii).